Here is a 431-residue protein sequence, read N- to C-terminus: WD repeat-containing protein 18 (431 aa).

WD repeat units lie at residues 78 to 118 (VCPG…AILS), 119 to 158 (RHFQ…QLDS), 170 to 211 (RHSL…MLLS), 213 to 252 (LFDV…LSRD), and 267 to 306 (GHRN…CIWT). The segment at 342–363 (HLNPSEQGDGTGTGGMSLRLGA) is disordered.

The protein belongs to the WD repeat IPI3/WDR18 family. Component of the PELP1 complex, composed of at least PELP1, TEX10 and WDR18. The complex interacts with pre-60S ribosome particles.

Its subcellular location is the nucleus. It is found in the nucleolus. The protein localises to the nucleoplasm. It localises to the dynein axonemal particle. Functionally, involved in left-right determination through controlling the correct clustering and migration of dorsal forerunner cells (DFCs) and Kupffer's vesicle formation. Component of the PELP1 complex involved in the nucleolar steps of 28S rRNA maturation and the subsequent nucleoplasmic transit of the pre-60S ribosomal subunit. This is WD repeat-containing protein 18 (wdr18) from Danio rerio (Zebrafish).